Here is a 412-residue protein sequence, read N- to C-terminus: Protein Mb3436c (412 aa).

Lysine 227 carries the post-translational modification N6-(pyridoxal phosphate)lysine.

The protein belongs to the DegT/DnrJ/EryC1 family.

The chain is Protein Mb3436c from Mycobacterium bovis (strain ATCC BAA-935 / AF2122/97).